A 157-amino-acid polypeptide reads, in one-letter code: Small ribosomal subunit protein uS7 (157 aa).

This sequence belongs to the universal ribosomal protein uS7 family. As to quaternary structure, part of the 30S ribosomal subunit. Contacts proteins S9 and S11.

One of the primary rRNA binding proteins, it binds directly to 16S rRNA where it nucleates assembly of the head domain of the 30S subunit. Is located at the subunit interface close to the decoding center, probably blocks exit of the E-site tRNA. The sequence is that of Small ribosomal subunit protein uS7 from Caulobacter sp. (strain K31).